We begin with the raw amino-acid sequence, 310 residues long: Ribosomal RNA small subunit methyltransferase H (310 aa).

S-adenosyl-L-methionine is bound by residues 40-42 (GGH), aspartate 59, phenylalanine 89, aspartate 104, and glutamine 111.

It belongs to the methyltransferase superfamily. RsmH family.

The protein localises to the cytoplasm. It catalyses the reaction cytidine(1402) in 16S rRNA + S-adenosyl-L-methionine = N(4)-methylcytidine(1402) in 16S rRNA + S-adenosyl-L-homocysteine + H(+). Its function is as follows. Specifically methylates the N4 position of cytidine in position 1402 (C1402) of 16S rRNA. This is Ribosomal RNA small subunit methyltransferase H from Amoebophilus asiaticus (strain 5a2).